A 284-amino-acid polypeptide reads, in one-letter code: L-ribulose-5-phosphate 3-epimerase UlaE (284 aa).

Belongs to the L-ribulose-5-phosphate 3-epimerase family.

It carries out the reaction L-ribulose 5-phosphate = L-xylulose 5-phosphate. It participates in cofactor degradation; L-ascorbate degradation; D-xylulose 5-phosphate from L-ascorbate: step 3/4. Catalyzes the isomerization of L-xylulose-5-phosphate to L-ribulose-5-phosphate. Is involved in the anaerobic L-ascorbate utilization. This is L-ribulose-5-phosphate 3-epimerase UlaE from Escherichia coli O139:H28 (strain E24377A / ETEC).